The following is a 702-amino-acid chain: Acetylcholinesterase (702 aa).

The N-terminal stretch at M1–C36 is a signal peptide. Residues H107–V134 are disordered. N-linked (GlcNAc...) asparagine glycosylation is present at N187. Cysteines 195 and 222 form a disulfide. S327 functions as the Acyl-ester intermediate in the catalytic mechanism. A disulfide bond links C381 and C394. Catalysis depends on charge relay system residues E453 and H567. C529 and C650 form a disulfide bridge. A glycan (N-linked (GlcNAc...) asparagine) is linked at N637.

It belongs to the type-B carboxylesterase/lipase family.

The protein localises to the synapse. It is found in the secreted. The protein resides in the cell membrane. The enzyme catalyses acetylcholine + H2O = choline + acetate + H(+). Rapidly hydrolyzes choline released into the synapse. The protein is Acetylcholinesterase (ACHE1) of Culex pipiens (House mosquito).